The following is a 560-amino-acid chain: Putative transport protein PBPRA2420 (560 aa).

Helical transmembrane passes span valine 5 to leucine 25, valine 37 to phenylalanine 57, phenylalanine 66 to phenylalanine 86, histidine 91 to threonine 111, and serine 161 to alanine 181. RCK C-terminal domains are found at residues arginine 203 to glycine 292 and lysine 293 to isoleucine 377. 6 helical membrane-spanning segments follow: residues leucine 386–phenylalanine 406, valine 409–leucine 429, leucine 452–alanine 472, methionine 477–glycine 497, alanine 506–asparagine 526, and alanine 539–methionine 559.

Belongs to the AAE transporter (TC 2.A.81) family. YbjL subfamily.

It localises to the cell membrane. This chain is Putative transport protein PBPRA2420, found in Photobacterium profundum (strain SS9).